A 363-amino-acid chain; its full sequence is Phosphoserine aminotransferase (363 aa).

Arg-42 is an L-glutamate binding site. Residues 76 to 77 (GR), Trp-102, Thr-156, Asp-175, and Gln-198 contribute to the pyridoxal 5'-phosphate site. N6-(pyridoxal phosphate)lysine is present on Lys-199. 240–241 (NT) lines the pyridoxal 5'-phosphate pocket.

The protein belongs to the class-V pyridoxal-phosphate-dependent aminotransferase family. SerC subfamily. Homodimer. The cofactor is pyridoxal 5'-phosphate.

It localises to the cytoplasm. It carries out the reaction O-phospho-L-serine + 2-oxoglutarate = 3-phosphooxypyruvate + L-glutamate. It catalyses the reaction 4-(phosphooxy)-L-threonine + 2-oxoglutarate = (R)-3-hydroxy-2-oxo-4-phosphooxybutanoate + L-glutamate. It functions in the pathway amino-acid biosynthesis; L-serine biosynthesis; L-serine from 3-phospho-D-glycerate: step 2/3. Its pathway is cofactor biosynthesis; pyridoxine 5'-phosphate biosynthesis; pyridoxine 5'-phosphate from D-erythrose 4-phosphate: step 3/5. Its function is as follows. Catalyzes the reversible conversion of 3-phosphohydroxypyruvate to phosphoserine and of 3-hydroxy-2-oxo-4-phosphonooxybutanoate to phosphohydroxythreonine. The protein is Phosphoserine aminotransferase of Shewanella baltica (strain OS155 / ATCC BAA-1091).